We begin with the raw amino-acid sequence, 89 residues long: MAHKKAGGSSRNGRDSKGKRLGIKAFGGEVVIPGNIIARQRGTTWHPGLNVGMGTDHTLFAKIEGRVTFQAKANGRTFVSVLPIAEAAE.

The disordered stretch occupies residues 1-21 (MAHKKAGGSSRNGRDSKGKRL).

It belongs to the bacterial ribosomal protein bL27 family.

The polypeptide is Large ribosomal subunit protein bL27 (Bradyrhizobium diazoefficiens (strain JCM 10833 / BCRC 13528 / IAM 13628 / NBRC 14792 / USDA 110)).